A 443-amino-acid chain; its full sequence is GTPase Der (443 aa).

EngA-type G domains are found at residues 3-167 (PVIA…PEEK) and 176-349 (IKIA…QSIQ). GTP is bound by residues 9 to 16 (GRPNVGKS), 56 to 60 (DTGGL), 119 to 122 (NKAD), 182 to 189 (GRPNVGKS), 229 to 233 (DTAGI), and 294 to 297 (NKWD). The 85-residue stretch at 350 to 434 (QELTTGQLTR…PVHIKLKTDP (85 aa)) folds into the KH-like domain.

Belongs to the TRAFAC class TrmE-Era-EngA-EngB-Septin-like GTPase superfamily. EngA (Der) GTPase family. Associates with the 50S ribosomal subunit.

Its function is as follows. GTPase that plays an essential role in the late steps of ribosome biogenesis. The chain is GTPase Der from Coxiella burnetii (strain CbuG_Q212) (Coxiella burnetii (strain Q212)).